Reading from the N-terminus, the 171-residue chain is 3-hydroxydecanoyl-[acyl-carrier-protein] dehydratase (171 aa).

The active site involves His-70.

The protein belongs to the thioester dehydratase family. FabA subfamily. Homodimer.

The protein resides in the cytoplasm. It catalyses the reaction a (3R)-hydroxyacyl-[ACP] = a (2E)-enoyl-[ACP] + H2O. It carries out the reaction (3R)-hydroxydecanoyl-[ACP] = (2E)-decenoyl-[ACP] + H2O. The catalysed reaction is (2E)-decenoyl-[ACP] = (3Z)-decenoyl-[ACP]. It functions in the pathway lipid metabolism; fatty acid biosynthesis. Its function is as follows. Necessary for the introduction of cis unsaturation into fatty acids. Catalyzes the dehydration of (3R)-3-hydroxydecanoyl-ACP to E-(2)-decenoyl-ACP and then its isomerization to Z-(3)-decenoyl-ACP. Can catalyze the dehydratase reaction for beta-hydroxyacyl-ACPs with saturated chain lengths up to 16:0, being most active on intermediate chain length. The protein is 3-hydroxydecanoyl-[acyl-carrier-protein] dehydratase of Xanthomonas oryzae pv. oryzae (strain MAFF 311018).